Here is a 478-residue protein sequence, read N- to C-terminus: tRNA (guanine(10)-N(2))-methyltransferase TRMT11 (478 aa).

The tract at residues 457-478 is disordered; it reads EERARSEMANAENVKSKGKEDV.

It belongs to the class I-like SAM-binding methyltransferase superfamily. TRM11 methyltransferase family. In terms of assembly, part of the heterodimeric TRMT11-TRM112 methyltransferase complex; this complex forms an active tRNA methyltransferase, where TRMT112 acts as an activator of the catalytic subunit TRMT11.

It localises to the cytoplasm. The enzyme catalyses guanosine(10) in tRNA + S-adenosyl-L-methionine = N(2)-methylguanosine(10) in tRNA + S-adenosyl-L-homocysteine + H(+). Its function is as follows. Catalytic subunit of the TRMT11-TRM112 methyltransferase complex, that specifically mediates the S-adenosyl-L-methionine-dependent N(2)-methylation of guanosine nucleotide at position 10 (m2G10) in tRNAs. This is one of the major tRNA (guanine-N(2))-methyltransferases. The chain is tRNA (guanine(10)-N(2))-methyltransferase TRMT11 (trmt11.L) from Xenopus laevis (African clawed frog).